The sequence spans 390 residues: 4-hydroxycoumarin synthase 1 (390 aa).

Cys-161 is a catalytic residue.

It belongs to the thiolase-like superfamily. Chalcone/stilbene synthases family. As to quaternary structure, homodimer.

It catalyses the reaction 2-hydroxybenzoyl-CoA + malonyl-CoA = 4-hydroxycoumarin + CO2 + 2 CoA. Its function is as follows. Type III polyketide synthase involved preferentially in the biosynthesis of 4-hydroxycoumarin from salicoyl-CoA. Can also use benzoyl-CoA and malonyl-CoA to produce 3,5-dihydroxybiphenyl as a major product and benzoyldiacetic acid lactone as a minor side product. Can also use m-hydroxybenzoyl-CoA as substrate, producing m-hydroxybenzoyl diacetic acid lactone as a derailment product. No activity with p-hydroxybenzoyl-CoA, CoA-linked cinnamic acids or acetyl-CoA. In Sorbus aucuparia (European mountain ash), this protein is 4-hydroxycoumarin synthase 1 (BIS2).